The sequence spans 251 residues: 2,3-bisphosphoglycerate-dependent phosphoglycerate mutase (251 aa).

Substrate is bound by residues 13 to 20 (RHGESEWN), 26 to 27 (TG), Arg65, 92 to 95 (ERHY), Lys103, 119 to 120 (RR), and 186 to 187 (GN). His14 functions as the Tele-phosphohistidine intermediate in the catalytic mechanism. Glu92 (proton donor/acceptor) is an active-site residue.

It belongs to the phosphoglycerate mutase family. BPG-dependent PGAM subfamily.

The enzyme catalyses (2R)-2-phosphoglycerate = (2R)-3-phosphoglycerate. Its pathway is carbohydrate degradation; glycolysis; pyruvate from D-glyceraldehyde 3-phosphate: step 3/5. Functionally, catalyzes the interconversion of 2-phosphoglycerate and 3-phosphoglycerate. The sequence is that of 2,3-bisphosphoglycerate-dependent phosphoglycerate mutase from Rhodococcus jostii (strain RHA1).